An 88-amino-acid polypeptide reads, in one-letter code: Large ribosomal subunit protein bL31B (88 aa).

It belongs to the bacterial ribosomal protein bL31 family. Type B subfamily. Part of the 50S ribosomal subunit.

In Nocardia farcinica (strain IFM 10152), this protein is Large ribosomal subunit protein bL31B.